The primary structure comprises 36 residues: Phospholipase A2 hemilipin-2 (36 aa).

Belongs to the phospholipase A2 family. Group III subfamily. In terms of assembly, heterodimer composed of a small subunit and a large subunit; disulfid-linked. Requires Ca(2+) as cofactor. As to expression, expressed by the venom gland.

The protein resides in the secreted. It carries out the reaction a 1,2-diacyl-sn-glycero-3-phosphocholine + H2O = a 1-acyl-sn-glycero-3-phosphocholine + a fatty acid + H(+). Scorpion venom phospholipase A2 (PLA2) that impacts angiogenesis in vitro and in vivo without showing any cytotoxic or apoptotic signs. The antiangiogenic effect is independent from the catalytic activity and seems to be held by its small subunit. PLA2 catalyzes the calcium-dependent hydrolysis of the 2-acyl groups in 3-sn-phosphoglycerides. In Hemiscorpius lepturus (Scorpion), this protein is Phospholipase A2 hemilipin-2.